Consider the following 213-residue polypeptide: A-type ATP synthase subunit D (213 aa).

The protein belongs to the V-ATPase D subunit family. Has multiple subunits with at least A(3), B(3), C, D, E, F, H, I and proteolipid K(x).

Its subcellular location is the cell membrane. Component of the A-type ATP synthase that produces ATP from ADP in the presence of a proton gradient across the membrane. This Saccharolobus solfataricus (strain ATCC 35092 / DSM 1617 / JCM 11322 / P2) (Sulfolobus solfataricus) protein is A-type ATP synthase subunit D.